Consider the following 674-residue polypeptide: Probable copper-transporting P-type ATPase B (674 aa).

The disordered stretch occupies residues 1-20; sequence MNHSNHMHHDNHESHHHYSG. A run of 6 helical transmembrane segments spans residues 32-52, 57-77, 95-115, 127-147, 284-304, and 315-335; these read FFVS…MGVN, FTFP…FFYG, GMMT…LYAF, TMDF…GHWI, GYLF…WMLI, and LVTV…PLVT. Residue aspartate 367 is the 4-aspartylphosphate intermediate of the active site. Mg(2+) is bound by residues aspartate 565 and aspartate 569. 2 helical membrane passes run 623-645 and 649-671; these read LWWG…AFIG and SPAV…AFTL.

It belongs to the cation transport ATPase (P-type) (TC 3.A.3) family. Type IB subfamily.

Its subcellular location is the cell membrane. It carries out the reaction Cu(+)(in) + ATP + H2O = Cu(+)(out) + ADP + phosphate + H(+). Involved in copper transport. This Staphylococcus haemolyticus (strain JCSC1435) protein is Probable copper-transporting P-type ATPase B (copB).